The following is a 335-amino-acid chain: MGHPPLLPLLLLLHTCVPASWGLRCMQCKTNGDCRVEECALGQDLCRTTIVRMWEEGEELELVEKSCTHSEKTNRTLSYRTGLKITSLTEVVCGLDLCNQGNSGRAVTYSRSRYLECISCGSSNMSCERGRHQSLQCRNPEEQCLDVVTHWIQEGEEGRPKDDRHLRGCGYLPGCPGSNGFHNNDTFHFLKCCNTTKCNEGPILELENLPQNGRQCYSCKGNSTHGCSSEETFLIDCRGPMNQCLVATGTHEPKNQSYMVRGCATASMCQHAHLGDAFSMNHIDVSCCTKSGCNHPDLDVQYRSGAAPQPGPAHLSLTITLLMTARLWGGTLLWT.

The first 22 residues, methionine 1–glycine 22, serve as a signal peptide directing secretion. 3 UPAR/Ly6 domains span residues leucine 23–tyrosine 114, leucine 115–glycine 213, and arginine 214–glycine 305. 3 disulfide bridges follow: cysteine 25–cysteine 46, cysteine 28–cysteine 34, and cysteine 39–cysteine 67. Asparagine 74 carries N-linked (GlcNAc...) asparagine glycosylation. 11 disulfides stabilise this stretch: cysteine 93–cysteine 98, cysteine 117–cysteine 144, cysteine 120–cysteine 127, cysteine 137–cysteine 169, cysteine 175–cysteine 192, cysteine 193–cysteine 198, cysteine 216–cysteine 244, cysteine 219–cysteine 227, cysteine 237–cysteine 263, cysteine 269–cysteine 287, and cysteine 288–cysteine 293. An N-linked (GlcNAc...) asparagine glycan is attached at asparagine 124. N-linked (GlcNAc...) asparagine glycans are attached at residues asparagine 184, asparagine 194, asparagine 222, and asparagine 255. Glycine 305 is lipidated: GPI-anchor amidated glycine. A propeptide spans alanine 306 to threonine 335 (removed in mature form).

In terms of assembly, monomer. Interacts (via the UPAR/Ly6 domains) with SRPX2. Interacts with MRC2. Interacts with FAP (seprase); the interaction occurs at the cell surface of invadopodia membrane. Interacts with SORL1 (via N-terminal ectodomain); this interaction decreases PLAUR internalization. The ternary complex composed of PLAUR-PLAU-SERPINE1 also interacts with SORL1. Interacts with CD82; this interaction prevents PLAUR from binding to its high affinity ligand PLAU.

Its subcellular location is the cell membrane. The protein resides in the cell projection. It is found in the invadopodium membrane. In terms of biological role, acts as a receptor for urokinase plasminogen activator. Plays a role in localizing and promoting plasmin formation. Mediates the proteolysis-independent signal transduction activation effects of U-PA. It is subject to negative-feedback regulation by U-PA which cleaves it into an inactive form. In Pan troglodytes (Chimpanzee), this protein is Urokinase plasminogen activator surface receptor (PLAUR).